We begin with the raw amino-acid sequence, 219 residues long: Ribose-5-phosphate isomerase A (219 aa).

Substrate-binding positions include 28-31 (SGST), 81-84 (DGAD), and 94-97 (KGGG). The Proton acceptor role is filled by E103. K121 is a substrate binding site.

It belongs to the ribose 5-phosphate isomerase family. Homodimer.

The catalysed reaction is aldehydo-D-ribose 5-phosphate = D-ribulose 5-phosphate. The protein operates within carbohydrate degradation; pentose phosphate pathway; D-ribose 5-phosphate from D-ribulose 5-phosphate (non-oxidative stage): step 1/1. Its function is as follows. Catalyzes the reversible conversion of ribose-5-phosphate to ribulose 5-phosphate. This is Ribose-5-phosphate isomerase A from Haemophilus influenzae (strain PittGG).